The sequence spans 209 residues: Imidazole glycerol phosphate synthase subunit HisH (209 aa).

In terms of domain architecture, Glutamine amidotransferase type-1 spans 3-209 (SVAVIDYGMG…ANFLTWNGVS (207 aa)). Cys82 acts as the Nucleophile in catalysis. Residues His187 and Glu189 contribute to the active site.

As to quaternary structure, heterodimer of HisH and HisF.

The protein localises to the cytoplasm. The catalysed reaction is 5-[(5-phospho-1-deoxy-D-ribulos-1-ylimino)methylamino]-1-(5-phospho-beta-D-ribosyl)imidazole-4-carboxamide + L-glutamine = D-erythro-1-(imidazol-4-yl)glycerol 3-phosphate + 5-amino-1-(5-phospho-beta-D-ribosyl)imidazole-4-carboxamide + L-glutamate + H(+). It carries out the reaction L-glutamine + H2O = L-glutamate + NH4(+). The protein operates within amino-acid biosynthesis; L-histidine biosynthesis; L-histidine from 5-phospho-alpha-D-ribose 1-diphosphate: step 5/9. Functionally, IGPS catalyzes the conversion of PRFAR and glutamine to IGP, AICAR and glutamate. The HisH subunit catalyzes the hydrolysis of glutamine to glutamate and ammonia as part of the synthesis of IGP and AICAR. The resulting ammonia molecule is channeled to the active site of HisF. The protein is Imidazole glycerol phosphate synthase subunit HisH of Nitrosococcus oceani (strain ATCC 19707 / BCRC 17464 / JCM 30415 / NCIMB 11848 / C-107).